Consider the following 445-residue polypeptide: FAS-associated factor 2-B (445 aa).

One can recognise a UBA domain in the interval 12–48; the sequence is DQTEKLLQFQDLTGIESIDQCRQTLQQHNWNIETAVQ. Residues 275-353 are a coiled coil; it reads SERLEREERN…ERKSECLPAE (79 aa). A disordered region spans residues 302-355; the sequence is RADQEKERKKKEKQDQKRREEEEAQRKQMLEERKKRNLEEEKERKSECLPAEPV. The span at 303 to 348 shows a compositional bias: basic and acidic residues; sequence ADQEKERKKKEKQDQKRREEEEAQRKQMLEERKKRNLEEEKERKSE. The UBX domain maps to 357–439; sequence DHPDNVKIIF…GLSQSQLLFV (83 aa).

The protein localises to the cytoplasm. It is found in the lipid droplet. It localises to the endoplasmic reticulum. Plays an important role in endoplasmic reticulum-associated degradation (ERAD) that mediates ubiquitin-dependent degradation of misfolded endoplasmic reticulum proteins. Involved in inhibition of lipid droplet degradation. Involved in stress granule disassembly. The chain is FAS-associated factor 2-B (faf2-b) from Xenopus laevis (African clawed frog).